Reading from the N-terminus, the 391-residue chain is 8-amino-7-oxononanoate synthase (391 aa).

Residue 108–109 coordinates pyridoxal 5'-phosphate; sequence GF. H133 lines the substrate pocket. Pyridoxal 5'-phosphate contacts are provided by S180, H208, and T236. N6-(pyridoxal phosphate)lysine is present on K239. Position 353 (T353) interacts with substrate.

The protein belongs to the class-II pyridoxal-phosphate-dependent aminotransferase family. BioF subfamily. As to quaternary structure, homodimer. It depends on pyridoxal 5'-phosphate as a cofactor.

The catalysed reaction is 6-carboxyhexanoyl-[ACP] + L-alanine + H(+) = (8S)-8-amino-7-oxononanoate + holo-[ACP] + CO2. The protein operates within cofactor biosynthesis; biotin biosynthesis. In terms of biological role, catalyzes the decarboxylative condensation of pimeloyl-[acyl-carrier protein] and L-alanine to produce 8-amino-7-oxononanoate (AON), [acyl-carrier protein], and carbon dioxide. In Thermosipho melanesiensis (strain DSM 12029 / CIP 104789 / BI429), this protein is 8-amino-7-oxononanoate synthase.